The sequence spans 496 residues: Fibronectin type III and SPRY domain-containing protein 1 (496 aa).

Residues 4–99 (QREALRKIIT…ALESSEELLE (96 aa)) are a coiled coil. The COS domain maps to 105-162 (LQASDSEDFSQAAKEIKDGITMAPAFRLSLKAKVSDNMSHLMVDFAQERQMLQALKFL). A Fibronectin type-III domain is found at 164–268 (VPSAPTIDLA…EPVTLETPAF (105 aa)). Residues 290–477 (WDAMGGKVQD…VTTGLQVPSA (188 aa)) enclose the B30.2/SPRY domain. The interval 301 to 336 (KAREKEGKGRTASPVNSPARGTPSPKRMSSGRGGRD) is disordered. Residues Arg310 and Arg320 each carry the omega-N-methylarginine modification.

As to quaternary structure, oligomerization is required for binding to microtubules.

It localises to the cytoplasm. The protein localises to the cytoskeleton. The protein resides in the microtubule organizing center. It is found in the centrosome. Its subcellular location is the nucleus. It localises to the cleavage furrow. In terms of biological role, may be involved in microtubule organization and stabilization. The polypeptide is Fibronectin type III and SPRY domain-containing protein 1 (Fsd1) (Mus musculus (Mouse)).